A 226-amino-acid polypeptide reads, in one-letter code: Orotidine 5'-phosphate decarboxylase (226 aa).

Residues aspartate 8, lysine 30, 58–67 (DLKIHDIPNT), threonine 117, arginine 177, glutamine 186, glycine 206, and arginine 207 contribute to the substrate site. Lysine 60 serves as the catalytic Proton donor.

It belongs to the OMP decarboxylase family. Type 1 subfamily. Homodimer.

The catalysed reaction is orotidine 5'-phosphate + H(+) = UMP + CO2. Its pathway is pyrimidine metabolism; UMP biosynthesis via de novo pathway; UMP from orotate: step 2/2. Its function is as follows. Catalyzes the decarboxylation of orotidine 5'-monophosphate (OMP) to uridine 5'-monophosphate (UMP). In Campylobacter jejuni subsp. jejuni serotype O:6 (strain 81116 / NCTC 11828), this protein is Orotidine 5'-phosphate decarboxylase.